The chain runs to 413 residues: Divalent metal cation transporter MntH (413 aa).

Helical transmembrane passes span 19-39 (FALM…GNFA), 49-69 (GYQL…IQLM), 94-114 (VWFY…AEFI), 122-142 (LVFG…TFLI), 155-175 (LVIG…LFFS), 196-216 (AVLL…IYLH), 240-260 (VAIA…TAAA), 287-307 (AAAL…TVVG), 323-343 (IPLL…ILAG), 349-369 (ILVM…IPLL), and 393-413 (LIVV…ALNL).

This sequence belongs to the NRAMP family.

Its subcellular location is the cell inner membrane. H(+)-stimulated, divalent metal cation uptake system. This chain is Divalent metal cation transporter MntH, found in Erwinia tasmaniensis (strain DSM 17950 / CFBP 7177 / CIP 109463 / NCPPB 4357 / Et1/99).